The sequence spans 422 residues: 3-phosphoshikimate 1-carboxyvinyltransferase (422 aa).

Positions 20, 21, and 25 each coordinate 3-phosphoshikimate. Lys20 is a binding site for phosphoenolpyruvate. Gly92 and Arg120 together coordinate phosphoenolpyruvate. Positions 163, 164, 165, 191, 304, and 331 each coordinate 3-phosphoshikimate. Gln165 serves as a coordination point for phosphoenolpyruvate. Residue Asp304 is the Proton acceptor of the active site. Positions 335 and 377 each coordinate phosphoenolpyruvate.

The protein belongs to the EPSP synthase family. In terms of assembly, monomer.

The protein localises to the cytoplasm. It catalyses the reaction 3-phosphoshikimate + phosphoenolpyruvate = 5-O-(1-carboxyvinyl)-3-phosphoshikimate + phosphate. The protein operates within metabolic intermediate biosynthesis; chorismate biosynthesis. Its function is as follows. Catalyzes the transfer of the enolpyruvyl moiety of phosphoenolpyruvate (PEP) to the 5-hydroxyl of shikimate-3-phosphate (S3P) to produce enolpyruvyl shikimate-3-phosphate and inorganic phosphate. The protein is 3-phosphoshikimate 1-carboxyvinyltransferase of Methanocorpusculum labreanum (strain ATCC 43576 / DSM 4855 / Z).